A 174-amino-acid chain; its full sequence is MASRVVEPLVVARVIGEVVDSFNPSVKLNVIYNGSKQVFNGHELMPAVIAAKPRVEIGGEDMRSAYTLIMTDPDVPGPSDPYLREHLHWIVTDIPGSTDSSFGREIVSYESPKPVIGIHRYVLLLYKQSGRQTVKPAATRDHFNTRRYTAENGLGSPVAAVYFNAQRETAARRR.

This sequence belongs to the phosphatidylethanolamine-binding protein family. Expressed in vegetative axillary meristems but not in the main shoot meristem.

The protein localises to the cytoplasm. In terms of biological role, may form complexes with phosphorylated ligands by interfering with kinases and their effectors. In Nicotiana tabacum (Common tobacco), this protein is CEN-like protein 1 (CET1).